The primary structure comprises 500 residues: L-arabinose isomerase (500 aa).

The Mn(2+) site is built by glutamate 306, glutamate 333, histidine 350, and histidine 450.

It belongs to the arabinose isomerase family. Homohexamer. Mn(2+) is required as a cofactor.

It carries out the reaction beta-L-arabinopyranose = L-ribulose. The protein operates within carbohydrate degradation; L-arabinose degradation via L-ribulose; D-xylulose 5-phosphate from L-arabinose (bacterial route): step 1/3. Its function is as follows. Catalyzes the conversion of L-arabinose to L-ribulose. The chain is L-arabinose isomerase from Salmonella typhi.